Here is a 388-residue protein sequence, read N- to C-terminus: Dual-specificity RNA methyltransferase RlmN (388 aa).

The Proton acceptor role is filled by E109. In terms of domain architecture, Radical SAM core spans 115 to 354 (EDDRATLCVS…TIVRKTRGDD (240 aa)). An intrachain disulfide couples C122 to C359. C129, C133, and C136 together coordinate [4Fe-4S] cluster. S-adenosyl-L-methionine is bound by residues 183 to 184 (GE), S215, 237 to 239 (SLH), and N316. The active-site S-methylcysteine intermediate is the C359.

It belongs to the radical SAM superfamily. RlmN family. Requires [4Fe-4S] cluster as cofactor.

Its subcellular location is the cytoplasm. The catalysed reaction is adenosine(2503) in 23S rRNA + 2 reduced [2Fe-2S]-[ferredoxin] + 2 S-adenosyl-L-methionine = 2-methyladenosine(2503) in 23S rRNA + 5'-deoxyadenosine + L-methionine + 2 oxidized [2Fe-2S]-[ferredoxin] + S-adenosyl-L-homocysteine. It carries out the reaction adenosine(37) in tRNA + 2 reduced [2Fe-2S]-[ferredoxin] + 2 S-adenosyl-L-methionine = 2-methyladenosine(37) in tRNA + 5'-deoxyadenosine + L-methionine + 2 oxidized [2Fe-2S]-[ferredoxin] + S-adenosyl-L-homocysteine. In terms of biological role, specifically methylates position 2 of adenine 2503 in 23S rRNA and position 2 of adenine 37 in tRNAs. m2A2503 modification seems to play a crucial role in the proofreading step occurring at the peptidyl transferase center and thus would serve to optimize ribosomal fidelity. This Citrobacter koseri (strain ATCC BAA-895 / CDC 4225-83 / SGSC4696) protein is Dual-specificity RNA methyltransferase RlmN.